A 246-amino-acid polypeptide reads, in one-letter code: 3'(2'),5'-bisphosphate nucleotidase CysQ (246 aa).

Mg(2+) is bound by residues Glu64, Asp83, Leu85, Asp86, and Asp205. Glu64 is a binding site for substrate. Substrate contacts are provided by residues 85–88 and Asp205; that span reads LDGT.

It belongs to the inositol monophosphatase superfamily. CysQ family. Mg(2+) is required as a cofactor.

It localises to the cell inner membrane. The catalysed reaction is adenosine 3',5'-bisphosphate + H2O = AMP + phosphate. In terms of biological role, converts adenosine-3',5'-bisphosphate (PAP) to AMP. In Shigella flexneri, this protein is 3'(2'),5'-bisphosphate nucleotidase CysQ.